Here is a 139-residue protein sequence, read N- to C-terminus: uncharacterized protein (139 aa).

This is an uncharacterized protein from Saccharomyces cerevisiae (strain ATCC 204508 / S288c) (Baker's yeast).